The primary structure comprises 282 residues: Glutamyl endopeptidase (282 aa).

A signal peptide spans 1–27 (MKKRFLSICTMTIAALATTTMVNTSYA). A propeptide spanning residues 28–66 (KTDTESHNHSSLGTENKNVLDINSSSHNIKPSQNKSYPS) is cleaved from the precursor. Active-site charge relay system residues include His-117, Asp-159, and Ser-235.

The protein belongs to the peptidase S1B family. Monomer.

The protein localises to the secreted. The enzyme catalyses Preferential cleavage: Glu-|-Xaa, Asp-|-Xaa.. Inhibited by diisopropyl fluorophosphate. Exhibits a significant hydrolytic activity for the carbonyl side of glutamic acid. Shows activity toward human fibronectin and type 1 collagen. This chain is Glutamyl endopeptidase (gseA), found in Staphylococcus epidermidis.